Reading from the N-terminus, the 561-residue chain is Sesquiterpene synthase 2 (561 aa).

Residues aspartate 313, aspartate 317, aspartate 458, and glutamate 466 each coordinate Mg(2+). A DDXXD motif motif is present at residues 313–317; that stretch reads DDIYD.

The protein belongs to the terpene synthase family. Tpsa subfamily. It depends on Mn(2+) as a cofactor. Requires Mg(2+) as cofactor.

It is found in the cytoplasm. It catalyses the reaction (2E,6E)-farnesyl diphosphate + H2O = kunzeaol + diphosphate. The protein operates within secondary metabolite biosynthesis; terpenoid biosynthesis. In terms of biological role, involved in the biosynthesis of kunzeaol. Produces mainly (-)-germacrene D along with gamma-cadinene. In Thapsia garganica (Deadly carrot), this protein is Sesquiterpene synthase 2 (STS2).